A 251-amino-acid polypeptide reads, in one-letter code: MDKEREKQVYLARLAEQAERYDEMVEAMKTVAKMDVELTVEERNLVSVGYKNVIGARRASWRILSSIEQKEESKGHDQNVKRIKTYQQRVEDELTKYALTLSVIDEHVVPSSTSGESTVFYYKMKGDYYRYLAEFKSGDDRKEAADQSLKAYEAATATASADLAPTHPIRLGLALNFSVFYYEILNSPERACHLAKQAFDEAIAELDSLSEESYKDSTLIMQLLRDNFTLWTSDLEEGGEHSKGDERQGEN.

It belongs to the 14-3-3 family. In terms of tissue distribution, most abundant in roots and flowers.

The protein is 14-3-3-like protein of Nicotiana tabacum (Common tobacco).